Here is a 217-residue protein sequence, read N- to C-terminus: 3-isopropylmalate dehydratase small subunit (217 aa).

The protein belongs to the LeuD family. LeuD type 1 subfamily. As to quaternary structure, heterodimer of LeuC and LeuD.

The catalysed reaction is (2R,3S)-3-isopropylmalate = (2S)-2-isopropylmalate. The protein operates within amino-acid biosynthesis; L-leucine biosynthesis; L-leucine from 3-methyl-2-oxobutanoate: step 2/4. Its function is as follows. Catalyzes the isomerization between 2-isopropylmalate and 3-isopropylmalate, via the formation of 2-isopropylmaleate. In Paraburkholderia phymatum (strain DSM 17167 / CIP 108236 / LMG 21445 / STM815) (Burkholderia phymatum), this protein is 3-isopropylmalate dehydratase small subunit.